We begin with the raw amino-acid sequence, 593 residues long: Cell surface glycoprotein (593 aa).

Positions 1-22 are cleaved as a signal peptide; that stretch reads MRKFTLLMLLLIVISMSGIAGA. Asn29, Asn58, Asn66, Asn74, Asn114, Asn122, Asn145, Asn148, Asn158, Asn176, Asn208, Asn231, Asn326, Asn336, Asn340, Asn431, Asn471, Asn500, and Asn516 each carry an N-linked (GalNAc...) asparagine glycan.

Post-translationally, N-glycosylated; contains glycans composed of methyl-Man, Man and GalNAc residues in a molar ratio of 2:3:1.

Its subcellular location is the secreted. It localises to the cell wall. The protein localises to the S-layer. In terms of biological role, the S-layer is a paracrystalline mono-layered assembly of proteins which coat the surface of the cell. The protein is Cell surface glycoprotein (slgA) of Methanothermus fervidus (strain ATCC 43054 / DSM 2088 / JCM 10308 / V24 S).